Here is a 377-residue protein sequence, read N- to C-terminus: RIB43A-like with coiled-coils protein 2 (377 aa).

Residues 217–246 (NKNQVVELTERKRQEKQQEQEDNMTEITNL) are a coiled coil. Residues 354–377 (KQMNTASSSQPTEDYFSQFNTRSR) are disordered.

This sequence belongs to the RIB43A family. In terms of assembly, microtubule inner protein component of sperm flagellar doublet microtubules.

The protein localises to the cytoplasm. It localises to the cytoskeleton. The protein resides in the cilium axoneme. It is found in the flagellum axoneme. Its function is as follows. Microtubule inner protein (MIP) part of the dynein-decorated doublet microtubules (DMTs) in cilia axoneme, which is required for motile cilia beating. The sequence is that of RIB43A-like with coiled-coils protein 2 from Mus musculus (Mouse).